The chain runs to 245 residues: 4-hydroxy-tetrahydrodipicolinate reductase (245 aa).

NAD(+) is bound by residues 7 to 12, D33, 75 to 77, and 102 to 105; these read GAKGKV, GTT, and APNF. The Proton donor/acceptor role is filled by H132. Residue H133 coordinates (S)-2,3,4,5-tetrahydrodipicolinate. The active-site Proton donor is the K136. 142–143 serves as a coordination point for (S)-2,3,4,5-tetrahydrodipicolinate; sequence GT.

Belongs to the DapB family.

It localises to the cytoplasm. It carries out the reaction (S)-2,3,4,5-tetrahydrodipicolinate + NAD(+) + H2O = (2S,4S)-4-hydroxy-2,3,4,5-tetrahydrodipicolinate + NADH + H(+). The catalysed reaction is (S)-2,3,4,5-tetrahydrodipicolinate + NADP(+) + H2O = (2S,4S)-4-hydroxy-2,3,4,5-tetrahydrodipicolinate + NADPH + H(+). Its pathway is amino-acid biosynthesis; L-lysine biosynthesis via DAP pathway; (S)-tetrahydrodipicolinate from L-aspartate: step 4/4. Its function is as follows. Catalyzes the conversion of 4-hydroxy-tetrahydrodipicolinate (HTPA) to tetrahydrodipicolinate. The protein is 4-hydroxy-tetrahydrodipicolinate reductase of Mycolicibacterium paratuberculosis (strain ATCC BAA-968 / K-10) (Mycobacterium paratuberculosis).